Here is a 400-residue protein sequence, read N- to C-terminus: Na(+)/H(+) antiporter NhaA (400 aa).

12 helical membrane-spanning segments follow: residues 18–38, 68–88, 105–125, 133–153, 163–183, 186–206, 211–231, 232–252, 267–287, 305–325, 338–358, and 372–392; these read LATE…AIII, VHMW…GLEI, LPAL…LAVS, GGWA…LALL, VMLV…IAVF, SSIN…LLAF, VVAL…TLLS, GVHA…SAGS, GLAP…NAGV, IALG…LLAV, WLQI…SLFI, and AAKI…CVIL.

Belongs to the NhaA Na(+)/H(+) (TC 2.A.33) antiporter family.

The protein localises to the cell inner membrane. The catalysed reaction is Na(+)(in) + 2 H(+)(out) = Na(+)(out) + 2 H(+)(in). Its function is as follows. Na(+)/H(+) antiporter that extrudes sodium in exchange for external protons. This Pseudomonas entomophila (strain L48) protein is Na(+)/H(+) antiporter NhaA.